We begin with the raw amino-acid sequence, 86 residues long: 4-hydroxyphenylacetate decarboxylase small subunit (86 aa).

The [4Fe-4S] cluster site is built by His3, Cys6, Cys19, Cys36, Cys45, Cys48, Cys62, and Cys80.

This sequence belongs to the HPA decarboxylase small subunit family. In terms of assembly, heterooctamer consisting of 4 large (HpdB) subunits and 4 small (HpdC) subunits, arranged as a tetramer of heterodimers. Requires [4Fe-4S] cluster as cofactor.

It catalyses the reaction 4-hydroxyphenylacetate + H(+) = 4-methylphenol + CO2. The catalysed reaction is 3,4-dihydroxyphenylacetate + H(+) = 4-methylcatechol + CO2. Component of the HPA decarboxylase that decarboxylates phenylacetates with a hydroxyl group in the p-position. Active toward 4-hydroxyphenylacetate and 3,4-dihydroxyphenylacetate, forming 4-methylphenol and 4-methylcatechol, respectively. Is likely involved in the catabolism of aromatic amino acids such as tyrosine fermentation. 4-methylphenol (p-cresol) formation provides metabolic toxicity, which allows an active suppression of other microbes and may provide growth advantages for the producers in highly competitive environments. The small subunit is essential for enzymatic activity of HPA decarboxylase, and also seems to be involved in the regulation of the enzyme oligomeric state and catalytic activity. This Clostridium scatologenes protein is 4-hydroxyphenylacetate decarboxylase small subunit.